The primary structure comprises 1193 residues: K(+) efflux antiporter 1, chloroplastic (1193 aa).

Residues 1 to 49 (MEYASTFQRPILFHGGDGASYCFPNRLISPKGISITSGDSKVHSCFRLR) constitute a chloroplast transit peptide. Residues 50–585 (RNVAQSGTLN…MIPHQEVNEE (536 aa)) are Stromal-facing. The segment at 103–135 (SLGNADSNDHRIGESSESSDETEATDLKDARVE) is disordered. Positions 131 to 355 (DARVENDTDS…RAEKSLSISQ (225 aa)) form a coiled coil. Lysine 168 carries the post-translational modification N6-acetyllysine; by NSI. The segment covering 351-364 (LSISQTPEETQGQL) has biased composition (polar residues). 2 disordered regions span residues 351–372 (LSISQTPEETQGQLSDEETSQE) and 421–474 (QPYE…NSPK). Basic and acidic residues predominate over residues 439–465 (KVVEADSEKPKINVQTKKQETQKDLPK). The helical transmembrane segment at 586 to 606 (EASLFDFLWLLLASVIFVPLF) threads the bilayer. Residues 607-612 (QKIPGG) are Chloroplast intermembrane-facing. A helical membrane pass occupies residues 613-633 (SPVLGYLAAGILIGPYGLSII). Residues 634-640 (RNVHGTR) lie on the Stromal side of the membrane. A helical transmembrane segment spans residues 641-661 (AIAEFGVVFLLFNIGLELSVE). Residues 662-668 (RLSSMKK) lie on the Chloroplast intermembrane side of the membrane. Residues 669–689 (YVFGLGSAQVLVTAAVVGLLA) traverse the membrane as a helical segment. Residues 690 to 698 (HYVAGQAGP) lie on the Stromal side of the membrane. Residues 699-719 (AAIVIGNGLALSSTAVVLQVL) traverse the membrane as a helical segment. Residues 720–733 (QERGESTSRHGRAS) lie on the Chloroplast intermembrane side of the membrane. Residues 734 to 754 (FSVLLFQDLAVVVLLILIPLI) traverse the membrane as a helical segment. The Stromal segment spans residues 755–766 (SPNSSKGGIGFQ). A helical transmembrane segment spans residues 767–787 (AIAEALGLAAVKAAVAITAII). Residues 788-827 (AGGRLLLRPIYKQIAENRNAEIFSANTLLVILGTSLLTAR) lie on the Chloroplast intermembrane side of the membrane. The helical transmembrane segment at 828–848 (AGLSMALGAFLAGLLLAETEF) threads the bilayer. Residues 849–860 (SLQVESDIAPYR) are Stromal-facing. The chain crosses the membrane as a helical span at residues 861-881 (GLLLGLFFMTVGMSIDPKLLL). Topologically, residues 882 to 883 (SN) are chloroplast intermembrane. The helical transmembrane segment at 884–904 (FPVIVGTLGLLIVGKTMLVVI) threads the bilayer. Over 905–912 (MGKLFGIS) the chain is Stromal. A helical membrane pass occupies residues 913–933 (IISAIRVGLLLAPGGEFAFVA). Residues 934–948 (FGEAVNQGIMSPQLS) are Chloroplast intermembrane-facing. A helical membrane pass occupies residues 949-969 (SLLFLVVGISMAITPWLAAGG). Residues 970-1193 (QLIASRFELH…QIIEGGTVVI (224 aa)) are Stromal-facing. The RCK N-terminal domain occupies 995 to 1112 (QGHIIICGFG…EKAGATAVVP (118 aa)). The disordered stretch occupies residues 1165–1184 (GYSRTSKPKPQPSDASGDNQ).

It belongs to the monovalent cation:proton antiporter 2 (CPA2) transporter (TC 2.A.37) family. KEA (TC 2.A.37.1) subfamily. Post-translationally, acetylated at Lys-168 by the stromal acetyltransferase enzyme NSI. As to expression, expressed in shoots and roots. Mainly localized to leaf veins, hypocotyls, mesophylls and guard cells. Accumulates at high levels in small and dividing plastids (at protein level).

The protein resides in the plastid. The protein localises to the chloroplast inner membrane. It carries out the reaction K(+)(in) + H(+)(out) = K(+)(out) + H(+)(in). Its activity is regulated as follows. Repressed by sodium ions Na(+). Its function is as follows. Electroneutral K(+)/H(+) efflux antiporter involved in chloroplastic K(+) homeostasis and osmotic adjustment, especially during plastid division and thylakoid membrane formation. Collaboratively with KEA2, adjusts alkaline stromal pH upon light to dark transitions in plastids. Together with KEA2, critical for chloroplast development, including chloroplast RNA-metabolism (e.g. rRNA maturation, polysome loading and RNA-protein interactions) and plastid gene expression (PGE), ion homeostasis, and photosynthesis. Contributes, during early seedling development, to the regulation of photosynthesis and abscisic acid- (ABA-) mediated primary root growth in a sucrose-dependent manner. Involved in the regulation of reactive oxygen and nitrogen species (ROS and RNS) metabolism. Required in roots for rapid hyperosmotic-induced Ca(2+) responses and for osmo-sensory potentiation in hyperosmotic conditions. May counteract resilience to drought and salt stress, involving photorespiratory pathway and stomata closure. The chain is K(+) efflux antiporter 1, chloroplastic from Arabidopsis thaliana (Mouse-ear cress).